The chain runs to 524 residues: Na(+)/H(+) antiporter NhaB (524 aa).

9 helical membrane passes run 13–33 (FLGNSPDWYKLAIMGFLIINP), 98–118 (LLLVFMVAGIYFMKQLLLFVF), 140–160 (AFLSAFLDALTVIAVVISVSV), 239–259 (FFIRMLPVTLPVFIFGLLVCL), 304–324 (AIIGVWLVLALALHLAEVGLV), 325–345 (GLSVIILATSFCGITNEHSLG), 358–378 (LTVFFAVVAVIIEQSLFTPII), 448–468 (ATPNGQAAFLFLLTSALAPLI), and 479–499 (ALPYTLVMTIVGLLGVEFLLV).

The protein belongs to the NhaB Na(+)/H(+) (TC 2.A.34) antiporter family.

It is found in the cell inner membrane. The catalysed reaction is 2 Na(+)(in) + 3 H(+)(out) = 2 Na(+)(out) + 3 H(+)(in). Na(+)/H(+) antiporter that extrudes sodium in exchange for external protons. This chain is Na(+)/H(+) antiporter NhaB, found in Yersinia pseudotuberculosis serotype I (strain IP32953).